The following is a 141-amino-acid chain: HTH-type transcriptional regulator MntR (141 aa).

Residues 1–63 enclose the HTH dtxR-type domain; it reads MPTPSMEDYI…YEKYRGLVLT (63 aa). Asp-8, Glu-11, His-77, Glu-99, Glu-102, and His-103 together coordinate Mn(2+).

It belongs to the DtxR/MntR family. In terms of assembly, homodimer.

The protein resides in the cytoplasm. With respect to regulation, DNA binding is strongly activated by Mn(2+). Functionally, central regulator of manganese homeostasis. This chain is HTH-type transcriptional regulator MntR, found in Geobacillus thermodenitrificans (strain NG80-2).